Here is a 3419-residue protein sequence, read N- to C-terminus: Utrophin (3419 aa).

Residues 1-246 form an actin-binding region; the sequence is MAKYGHLEAS…LPDKKSIIMY (246 aa). The residue at position 4 (Tyr-4) is a Phosphotyrosine. A Phosphoserine modification is found at Ser-10. 2 Calponin-homology (CH) domains span residues 31-135 and 150-255; these read DVQK…LHWQ and TNSE…EVLP. The tract at residues 268 to 905 is interaction with SYNM; the sequence is TLPRKYKKEC…YQQQLENELK (638 aa). Phosphoserine is present on Ser-295. Spectrin repeat units lie at residues 312 to 416, 421 to 525, 532 to 636, 690 to 795, 801 to 901, 910 to 1012, 1019 to 1121, 1128 to 1229, 1236 to 1333, 1335 to 1436, 1438 to 1540, 1547 to 1648, 1653 to 1747, 1748 to 1840, 1841 to 1958, 1969 to 2070, and 2077 to 2176; these read DSYQ…SRLH, ELQK…NRLQ, QELL…NQVT, KKFD…RKIQ, NAYF…QQLE, PAYL…RSLE, RDFK…SRLS, MNLK…HTLE, VELL…ISLE, QLQV…LFQK, ANFE…QDLE, RKLK…NTLL, QLEV…INSA, QMLI…KIKA, IPQR…SDRR, KQFH…PRLK, and SGYR…KTRT. The interaction with SYNM stretch occupies residues 1336–1761; sequence LQVLRETDHM…GQDPAGTVEA (426 aa). Position 1998 is a phosphoserine (Ser-1998). Phosphoserine is present on Ser-2201. Spectrin repeat units follow at residues 2216-2319, 2336-2426, 2433-2542, 2549-2674, and 2681-2783; these read ADLD…QQLE, EELM…SALE, QTSR…AHLE, NRLL…KQVG, and RDLQ…KQLQ. The segment at 2616 to 2640 is disordered; sequence DQPIEAPEEPRRNPQSKTELTPEER. The segment at 2785 to 3152 is interaction with SYNM; that stretch reads AHRDFGPSSQ…TVLEGDNLET (368 aa). Positions 2799–2832 constitute a WW domain; sequence TSVQLPWQRSISHNKVPYYINHQTQTTCWDHPKM. The ZZ-type; degenerate zinc finger occupies 3052 to 3108; that stretch reads KHQAKCNICKECPIVGFRYRSLKHFNYDVCQSCFFSGRTAKGHKLHYPMVEYCIPTT. Cys-3057, Cys-3060, Cys-3081, and Cys-3084 together coordinate Zn(2+). 2 disordered regions span residues 3277–3296 and 3344–3395; these read RRGLPLGSPPDSIVSPYHTS and DSDS…TDLT. Ser-3284 carries the post-translational modification Phosphoserine.

Homodimer. Interacts with the syntrophins SNTA1; SNTB1 and SNTB2. Interacts with SYNM. Interacts (via its WWW and ZZ domains) with DAG1 (via the PPXY motif of betaDAG1); the interaction is inhibited by the tyrosine phosphorylation of the PPXY motif of DAG1. Interacts with DTNB. Interacts with PGM5.

It localises to the postsynaptic cell membrane. Its subcellular location is the cytoplasm. The protein localises to the cytoskeleton. In terms of biological role, may play a role in anchoring the cytoskeleton to the plasma membrane. The chain is Utrophin from Rattus norvegicus (Rat).